The chain runs to 332 residues: 5-dehydro-2-deoxygluconokinase (332 aa).

The protein belongs to the carbohydrate kinase PfkB family.

The catalysed reaction is 5-dehydro-2-deoxy-D-gluconate + ATP = 6-phospho-5-dehydro-2-deoxy-D-gluconate + ADP + H(+). It participates in polyol metabolism; myo-inositol degradation into acetyl-CoA; acetyl-CoA from myo-inositol: step 5/7. In terms of biological role, catalyzes the phosphorylation of 5-dehydro-2-deoxy-D-gluconate (2-deoxy-5-keto-D-gluconate or DKG) to 6-phospho-5-dehydro-2-deoxy-D-gluconate (DKGP). The polypeptide is 5-dehydro-2-deoxygluconokinase (Bacillus anthracis (strain A0248)).